A 329-amino-acid polypeptide reads, in one-letter code: Malate dehydrogenase (329 aa).

12–18 (GAAGQIG) contributes to the NAD(+) binding site. Substrate is bound by residues Arg93 and Arg99. NAD(+) is bound by residues Asn106, Gln113, and 130–132 (VGN). Substrate is bound by residues Asn132 and Arg166. The active-site Proton acceptor is His191.

Belongs to the LDH/MDH superfamily. MDH type 2 family.

The catalysed reaction is (S)-malate + NAD(+) = oxaloacetate + NADH + H(+). Its function is as follows. Catalyzes the reversible oxidation of malate to oxaloacetate. The polypeptide is Malate dehydrogenase (Aromatoleum aromaticum (strain DSM 19018 / LMG 30748 / EbN1) (Azoarcus sp. (strain EbN1))).